Consider the following 62-residue polypeptide: 2-hydroxymuconate tautomerase (62 aa).

Residue proline 2 is the Proton acceptor; via imino nitrogen of the active site. Leucine 9–arginine 12 lines the substrate pocket.

It belongs to the 4-oxalocrotonate tautomerase family. In terms of assembly, homohexamer.

The catalysed reaction is (2Z,4E)-2-hydroxyhexa-2,4-dienedioate = (3E)-2-oxohex-3-enedioate. Catalyzes both 1,3- and 1,5-keto-enol tautomerization of the diacid 2-hydroxymuconate (2-hydroxy-2,4-hexadienedioate) to produce 2-oxo-4-hexenedioate. This reaction is highly stereoselective and produces a mixture of stereoisomers, where the (3S)-isomer of 2-oxo-4-hexenedioate predominates. Also catalyzes the tautomerization of 2-hydroxymuconate to 2-oxo-3-hexenedioate, however this reaction is slower and occurs after the tautomerization of 2-hydroxymuconate to 2-oxo-4-hexenedioate. Using 2-hydroxy-2,4-pentadienoate, phenylenolpyruvate, (p-hydroxyphenyl)-enolpyruvate and 2-hydroxy-2,4-heptadiene-1,7-dioate, YwhB is a highly efficient 1,3-keto-enol tautomerase, but clearly not a 1,5-keto-enol tautomerase. Tautomerization of the two monoacids 2-hydroxy-2,4-pentadienoate and phenylenolpyruvate produces a mixture of stereoisomers, where the (3R)-isomers predominate. This is 2-hydroxymuconate tautomerase (ywhB) from Bacillus subtilis (strain 168).